A 238-amino-acid chain; its full sequence is Adapter protein MecA (238 aa).

Residues 108–133 (EDENEESVQGNQQQRRSHASDHSKRA) form a disordered region.

The protein belongs to the MecA family. As to quaternary structure, homodimer.

Enables the recognition and targeting of unfolded and aggregated proteins to the ClpC protease or to other proteins involved in proteolysis. The polypeptide is Adapter protein MecA (Staphylococcus carnosus (strain TM300)).